A 156-amino-acid chain; its full sequence is Enhancer of split M1 protein (156 aa).

Positions 1–19 are cleaved as a signal peptide; the sequence is MMSQTLTLCCLALVACVYG. Kazal-like domains lie at 23–81 and 96–156; these read STND…AWCS and KLEV…EEKC. 5 disulfide bridges follow: cysteine 29–cysteine 62, cysteine 33–cysteine 55, cysteine 102–cysteine 135, cysteine 106–cysteine 128, and cysteine 114–cysteine 156.

This is Enhancer of split M1 protein (Kaz-m1) from Drosophila melanogaster (Fruit fly).